The primary structure comprises 592 residues: Serine/threonine-protein kinase ksg1 (592 aa).

Positions 1–10 (MRNTHNPNET) are enriched in polar residues. A disordered region spans residues 1 to 92 (MRNTHNPNET…NPSSGASTPN (92 aa)). Over residues 11–22 (EASEDAENDTQS) the composition is skewed to acidic residues. Over residues 27 to 37 (SFDHGSSEKLN) the composition is skewed to basic and acidic residues. Residues 42 to 68 (PKTQNSAIPQSNALNTTPNESTSQIDS) are compositionally biased toward polar residues. Residues Ser64 and Ser69 each carry the phosphoserine modification. Residues 80-92 (STPNPSSGASTPN) show a composition bias toward polar residues. One can recognise a Protein kinase domain in the interval 99 to 366 (FKFGEILGEG…VDEIHQHPFF (268 aa)). Residues 109-111 (SYS) and Lys128 each bind ATP. The tract at residues 130 to 175 (LDKRHIIKEKKEKYVNIEKEALCILSKHPGFIKLFYTFQDAHNLYF) is PIF-pocket. ATP-binding positions include 178 to 180 (SLA) and Glu184. Asp223 functions as the Proton acceptor in the catalytic mechanism. ATP-binding residues include Glu227 and Asp241. Residues 461-572 (ISKIGTLNVY…ELLDKASSIS (112 aa)) form the PH domain.

The protein belongs to the protein kinase superfamily. AGC Ser/Thr protein kinase family. PDPK1 subfamily.

It is found in the cytoplasm. The enzyme catalyses L-seryl-[protein] + ATP = O-phospho-L-seryl-[protein] + ADP + H(+). It catalyses the reaction L-threonyl-[protein] + ATP = O-phospho-L-threonyl-[protein] + ADP + H(+). In terms of biological role, involved in the control of sexual development and cell growth under stressed conditions. Phosphorylates AGC kinase gad8 at 'Thr-387', activating gad8 kinase activity and promoting sexual development. Phosphorylates AGC kinase psk1 at 'Ser-248', activating psk1 kinase activity and promoting phosphorylation of ribosomal protein S6. This is Serine/threonine-protein kinase ksg1 from Schizosaccharomyces pombe (strain 972 / ATCC 24843) (Fission yeast).